Here is a 210-residue protein sequence, read N- to C-terminus: Redox-sensing transcriptional repressor Rex (210 aa).

Residues K17–F56 constitute a DNA-binding region (H-T-H motif). G91–G96 is an NAD(+) binding site.

This sequence belongs to the transcriptional regulatory Rex family. In terms of assembly, homodimer.

The protein localises to the cytoplasm. Functionally, modulates transcription in response to changes in cellular NADH/NAD(+) redox state. In Clostridium botulinum (strain Loch Maree / Type A3), this protein is Redox-sensing transcriptional repressor Rex.